A 428-amino-acid polypeptide reads, in one-letter code: ATP-dependent RNA helicase RhlB (428 aa).

The short motif at 9–37 is the Q motif element; that stretch reads KKFSDFALHPKVIEALDNKGFSNCTPIQA. Residues 40–219 enclose the Helicase ATP-binding domain; the sequence is LPFTVEGRDV…FEQMNHAEYI (180 aa). Position 53 to 60 (53 to 60) interacts with ATP; it reads AQTGTGKT. The DEAD box signature appears at 165–168; that stretch reads DEAD. Residues 245 to 390 form the Helicase C-terminal domain; that stretch reads RLLQTLLEEE…VSKYNSQALL (146 aa). The tract at residues 392 to 428 is disordered; it reads DLPAPKRRYRSRSGNHQRRNNLSHRNNTPRNNRKRSG. The segment covering 396–413 has biased composition (basic residues); that stretch reads PKRRYRSRSGNHQRRNNL.

The protein belongs to the DEAD box helicase family. RhlB subfamily. Component of the RNA degradosome, which is a multiprotein complex involved in RNA processing and mRNA degradation.

The protein resides in the cytoplasm. It carries out the reaction ATP + H2O = ADP + phosphate + H(+). Its function is as follows. DEAD-box RNA helicase involved in RNA degradation. Has RNA-dependent ATPase activity and unwinds double-stranded RNA. The protein is ATP-dependent RNA helicase RhlB of Photorhabdus laumondii subsp. laumondii (strain DSM 15139 / CIP 105565 / TT01) (Photorhabdus luminescens subsp. laumondii).